The following is a 264-amino-acid chain: GATA transcription factor 2 (264 aa).

Low complexity predominate over residues 29–42; the sequence is SSSGGSTAATSSSS. Disordered regions lie at residues 29–57 and 96–192; these read SSSG…HHLP and NPLG…TPQW. Residues 101–110 show a composition bias toward polar residues; the sequence is TMTSVKTETS. The Nuclear localization signal signature appears at 114–121; that stretch reads KPRSKRSR. A compositionally biased stretch (gly residues) spans 155 to 164; that stretch reads SGGGGGGGGR. Residues 175 to 229 form a GATA-type zinc finger; sequence GGGMRRCTHCASEKTPQWRTGPLGPKTLCNACGVRFKSGRLVPEYRPASSPTFVL.

The protein belongs to the type IV zinc-finger family. Class A subfamily. Mostly expressed in roots. Also expressed in flowers and leaves, and to a lower extent in stems.

The protein resides in the nucleus. Its function is as follows. Transcriptional activator that specifically binds 5'-GATA-3' or 5'-GAT-3' motifs within gene promoters. May be involved in the regulation of some light-responsive genes. The polypeptide is GATA transcription factor 2 (GATA2) (Arabidopsis thaliana (Mouse-ear cress)).